The following is a 367-amino-acid chain: Cyclin-D5-1 (367 aa).

The tract at residues 307-333 is disordered; sequence QPTSPASKSTTTTTGKRSSSSSCSEST.

Belongs to the cyclin family. Cyclin D subfamily.

This chain is Cyclin-D5-1 (CYCD5-1), found in Oryza sativa subsp. japonica (Rice).